The primary structure comprises 312 residues: Aspartate carbamoyltransferase catalytic subunit (312 aa).

2 residues coordinate carbamoyl phosphate: Arg-55 and Thr-56. Lys-83 lines the L-aspartate pocket. Positions 105, 138, and 141 each coordinate carbamoyl phosphate. Positions 171 and 225 each coordinate L-aspartate. Residues Gly-266 and Pro-267 each coordinate carbamoyl phosphate.

Belongs to the aspartate/ornithine carbamoyltransferase superfamily. ATCase family. Heterododecamer (2C3:3R2) of six catalytic PyrB chains organized as two trimers (C3), and six regulatory PyrI chains organized as three dimers (R2).

The enzyme catalyses carbamoyl phosphate + L-aspartate = N-carbamoyl-L-aspartate + phosphate + H(+). It functions in the pathway pyrimidine metabolism; UMP biosynthesis via de novo pathway; (S)-dihydroorotate from bicarbonate: step 2/3. Catalyzes the condensation of carbamoyl phosphate and aspartate to form carbamoyl aspartate and inorganic phosphate, the committed step in the de novo pyrimidine nucleotide biosynthesis pathway. This Corynebacterium glutamicum (strain R) protein is Aspartate carbamoyltransferase catalytic subunit.